Reading from the N-terminus, the 90-residue chain is Secretory calcium-binding phosphoprotein proline-glutamine-rich 1 (90 aa).

An N-terminal signal peptide occupies residues 1–15; the sequence is MQLFLLAALLSAAAA.

As to expression, expressed in enamel organ.

Its subcellular location is the secreted. Its function is as follows. Tooth-associated epithelia protein that may participate in structuring the basal lamina at cell-tooth interface. The protein is Secretory calcium-binding phosphoprotein proline-glutamine-rich 1 of Mus musculus (Mouse).